The chain runs to 302 residues: Dermonecrotic toxin LiSicTox-alphaIA2bii (302 aa).

The first 14 residues, 1 to 14, serve as a signal peptide directing secretion; that stretch reads IALILVCWSVLSQA. A propeptide spanning residues 15-22 is cleaved from the precursor; that stretch reads AQTDVEGR. Histidine 34 is a catalytic residue. Residues glutamate 54 and aspartate 56 each contribute to the Mg(2+) site. Histidine 70 acts as the Nucleophile in catalysis. 2 disulfides stabilise this stretch: cysteine 74–cysteine 80 and cysteine 76–cysteine 219. Position 114 (aspartate 114) interacts with Mg(2+). The N-linked (GlcNAc...) asparagine glycan is linked to asparagine 279.

Belongs to the arthropod phospholipase D family. Class II subfamily. Requires Mg(2+) as cofactor. In terms of tissue distribution, expressed by the venom gland.

Its subcellular location is the secreted. It carries out the reaction an N-(acyl)-sphingosylphosphocholine = an N-(acyl)-sphingosyl-1,3-cyclic phosphate + choline. The enzyme catalyses an N-(acyl)-sphingosylphosphoethanolamine = an N-(acyl)-sphingosyl-1,3-cyclic phosphate + ethanolamine. It catalyses the reaction a 1-acyl-sn-glycero-3-phosphocholine = a 1-acyl-sn-glycero-2,3-cyclic phosphate + choline. The catalysed reaction is a 1-acyl-sn-glycero-3-phosphoethanolamine = a 1-acyl-sn-glycero-2,3-cyclic phosphate + ethanolamine. Functionally, dermonecrotic toxins cleave the phosphodiester linkage between the phosphate and headgroup of certain phospholipids (sphingolipid and lysolipid substrates), forming an alcohol (often choline) and a cyclic phosphate. This toxin acts on sphingomyelin (SM). It may also act on ceramide phosphoethanolamine (CPE), lysophosphatidylcholine (LPC) and lysophosphatidylethanolamine (LPE), but not on lysophosphatidylserine (LPS), and lysophosphatidylglycerol (LPG). It acts by transphosphatidylation, releasing exclusively cyclic phosphate products as second products. Induces dermonecrosis, hemolysis, increased vascular permeability, edema, inflammatory response, and platelet aggregation. The protein is Dermonecrotic toxin LiSicTox-alphaIA2bii of Loxosceles intermedia (Brown spider).